Here is an 870-residue protein sequence, read N- to C-terminus: Ribonucleoside-diphosphate reductase large subunit (870 aa).

In terms of domain architecture, ATP-cone spans 16 to 110 (MYVVKRDGTK…VSNLHKQTSK (95 aa)). Residues 20–21 (KR), 26–32 (ENVSFDK), threonine 71, and aspartate 75 contribute to the ATP site. Serine 235 contacts GDP. An intrachain disulfide couples cysteine 236 to cysteine 463. Residues 244-246 (DSI), lysine 261, arginine 274, and 281-282 (RG) contribute to the dTTP site. A GDP-binding site is contributed by asparagine 446. The active-site Proton acceptor is the asparagine 446. Cysteine 448 (cysteine radical intermediate) is an active-site residue. GDP contacts are provided by residues glutamate 450 and 632-635 (TAST). Catalysis depends on glutamate 450, which acts as the Proton acceptor. Residues 789–854 (KPVENNINST…NNNEDDLANY (66 aa)) are disordered. Positions 796 to 811 (NSTTPLKTPTKTPNSS) are enriched in low complexity. Over residues 812–831 (NRISTSPTNNLTSPIRFNIT) the composition is skewed to polar residues. The span at 832-844 (QQQQQQQQQQQQQ) shows a compositional bias: low complexity.

This sequence belongs to the ribonucleoside diphosphate reductase large chain family. Heterodimer of a large and a small subunit.

It is found in the cytoplasm. It catalyses the reaction a 2'-deoxyribonucleoside 5'-diphosphate + [thioredoxin]-disulfide + H2O = a ribonucleoside 5'-diphosphate + [thioredoxin]-dithiol. With respect to regulation, under complex allosteric control mediated by deoxynucleoside triphosphates and ATP binding to separate specificity and activation sites on the large subunit. The type of nucleotide bound at the specificity site determines substrate preference. It seems probable that ATP makes the enzyme reduce CDP and UDP, dGTP favors ADP reduction and dTTP favors GDP reduction. Stimulated by ATP and inhibited by dATP binding to the activity site. Provides the precursors necessary for DNA synthesis. Catalyzes the biosynthesis of deoxyribonucleotides from the corresponding ribonucleotides. The sequence is that of Ribonucleoside-diphosphate reductase large subunit (rnrA) from Dictyostelium discoideum (Social amoeba).